A 189-amino-acid chain; its full sequence is Nucleoside diphosphate kinase 6 (189 aa).

ATP is bound by residues lysine 19, phenylalanine 68, arginine 96, threonine 102, arginine 116, and asparagine 126. Residue histidine 129 is the Pros-phosphohistidine intermediate of the active site.

This sequence belongs to the NDK family. Mg(2+) serves as cofactor.

It catalyses the reaction a 2'-deoxyribonucleoside 5'-diphosphate + ATP = a 2'-deoxyribonucleoside 5'-triphosphate + ADP. The enzyme catalyses a ribonucleoside 5'-diphosphate + ATP = a ribonucleoside 5'-triphosphate + ADP. Major role in the synthesis of nucleoside triphosphates other than ATP. The ATP gamma phosphate is transferred to the NDP beta phosphate via a ping-pong mechanism, using a phosphorylated active-site intermediate. The protein is Nucleoside diphosphate kinase 6 (Nme6) of Mus musculus (Mouse).